Here is a 773-residue protein sequence, read N- to C-terminus: Molybdenum cofactor sulfurase (773 aa).

K243 is subject to N6-(pyridoxal phosphate)lysine. C410 is a catalytic residue. An MOSC domain is found at 632-773; it reads LRLLRQSGQR…LSCGDTVLVE (142 aa). The residue at position 731 (S731) is a Phosphoserine.

Belongs to the class-V pyridoxal-phosphate-dependent aminotransferase family. MOCOS subfamily. Pyridoxal 5'-phosphate is required as a cofactor.

It carries out the reaction Mo-molybdopterin + L-cysteine + AH2 = thio-Mo-molybdopterin + L-alanine + A + H2O. It participates in cofactor biosynthesis; molybdopterin biosynthesis. In terms of biological role, sulfurates the molybdenum cofactor. Sulfation of molybdenum is essential for xanthine dehydrogenase (XDH) and aldehyde oxidase (ADO) enzymes in which molybdenum cofactor is liganded by 1 oxygen and 1 sulfur atom in active form. This is Molybdenum cofactor sulfurase from Drosophila ananassae (Fruit fly).